The following is a 504-amino-acid chain: Arabinose import ATP-binding protein AraG (504 aa).

ABC transporter domains lie at 8–243 (LSFR…MVGR) and 256–499 (YGEE…MPKV). 40-47 (GENGAGKS) provides a ligand contact to ATP.

Belongs to the ABC transporter superfamily. Arabinose importer (TC 3.A.1.2.2) family. The complex is composed of two ATP-binding proteins (AraG), two transmembrane proteins (AraH) and a solute-binding protein (AraF).

It localises to the cell inner membrane. It carries out the reaction L-arabinose(out) + ATP + H2O = L-arabinose(in) + ADP + phosphate + H(+). Functionally, part of the ABC transporter complex AraFGH involved in arabinose import. Responsible for energy coupling to the transport system. This chain is Arabinose import ATP-binding protein AraG, found in Escherichia coli O6:K15:H31 (strain 536 / UPEC).